The chain runs to 244 residues: Triosephosphate isomerase (244 aa).

Position 9-11 (9-11) interacts with substrate; it reads NWK. Catalysis depends on His93, which acts as the Electrophile. Glu160 (proton acceptor) is an active-site residue. Residues Gly166 and Ser206 each coordinate substrate.

It belongs to the triosephosphate isomerase family. In terms of assembly, homodimer.

It localises to the cytoplasm. It carries out the reaction D-glyceraldehyde 3-phosphate = dihydroxyacetone phosphate. It functions in the pathway carbohydrate biosynthesis; gluconeogenesis. The protein operates within carbohydrate degradation; glycolysis; D-glyceraldehyde 3-phosphate from glycerone phosphate: step 1/1. Involved in the gluconeogenesis. Catalyzes stereospecifically the conversion of dihydroxyacetone phosphate (DHAP) to D-glyceraldehyde-3-phosphate (G3P). This is Triosephosphate isomerase from Mycoplasma genitalium (strain ATCC 33530 / DSM 19775 / NCTC 10195 / G37) (Mycoplasmoides genitalium).